Consider the following 93-residue polypeptide: Small ribosomal subunit protein uS19 (93 aa).

This sequence belongs to the universal ribosomal protein uS19 family.

Its function is as follows. Protein S19 forms a complex with S13 that binds strongly to the 16S ribosomal RNA. The chain is Small ribosomal subunit protein uS19 from Anaplasma marginale (strain Florida).